The primary structure comprises 104 residues: Pole-localizer protein TmaR (104 aa).

2 coiled-coil regions span residues 7-34 (IVNQ…NRKR) and 76-96 (SAEI…LTEE).

It belongs to the pole-localizer TmaR family.

It localises to the cytoplasm. Functionally, pole-localizer protein involved in the regulation of several cellular processes. This is Pole-localizer protein TmaR from Vibrio atlanticus (strain LGP32) (Vibrio splendidus (strain Mel32)).